Consider the following 233-residue polypeptide: 7-cyano-7-deazaguanine synthase (233 aa).

ATP is bound at residue Leu-13 to Met-23. The Zn(2+) site is built by Cys-197, Cys-207, Cys-210, and Cys-213.

Belongs to the QueC family. It depends on Zn(2+) as a cofactor.

It carries out the reaction 7-carboxy-7-deazaguanine + NH4(+) + ATP = 7-cyano-7-deazaguanine + ADP + phosphate + H2O + H(+). The protein operates within purine metabolism; 7-cyano-7-deazaguanine biosynthesis. Functionally, catalyzes the ATP-dependent conversion of 7-carboxy-7-deazaguanine (CDG) to 7-cyano-7-deazaguanine (preQ(0)). This chain is 7-cyano-7-deazaguanine synthase, found in Desulfatibacillum aliphaticivorans.